Here is a 509-residue protein sequence, read N- to C-terminus: Dihydrolipoyl dehydrogenase, mitochondrial (509 aa).

Residues 1 to 35 (MQSWSRVYCSLAKRGHFNRISHGLQGLSAVPLRTY) constitute a mitochondrion transit peptide. Lys-66 is subject to N6-acetyllysine; alternate. Position 66 is an N6-succinyllysine; alternate (Lys-66). Residues 71 to 80 (EKNETLGGTC) and Lys-89 each bind FAD. Cys-80 and Cys-85 are joined by a disulfide. 4 positions are modified to N6-acetyllysine; alternate: Lys-104, Lys-122, Lys-132, and Lys-143. Lys-104, Lys-122, Lys-132, and Lys-143 each carry N6-succinyllysine; alternate. Gly-154 contacts FAD. Lys-159 and Lys-166 each carry N6-succinyllysine. Residue 183–185 (TGS) participates in FAD binding. Residues 220-227 (GAGVIGVE) and Glu-243 contribute to the NAD(+) site. N6-succinyllysine occurs at positions 273 and 277. Val-278 provides a ligand contact to NAD(+). Phosphoserine occurs at positions 285 and 297. Position 314 (Gly-314) interacts with NAD(+). Lys-346 carries the post-translational modification N6-acetyllysine. FAD contacts are provided by residues Asp-355 and 361–364 (MLAH). Lys-410 carries the post-translational modification N6-acetyllysine; alternate. Lys-410 carries the N6-succinyllysine; alternate modification. Residues Lys-417 and Lys-420 each carry the N6-acetyllysine modification. Residue Lys-430 is modified to N6-succinyllysine. His-487 acts as the Proton acceptor in catalysis. A Phosphoserine modification is found at Ser-502. An N6-acetyllysine; alternate modification is found at Lys-505. The residue at position 505 (Lys-505) is an N6-succinyllysine; alternate.

The protein belongs to the class-I pyridine nucleotide-disulfide oxidoreductase family. Homodimer. Part of the multimeric pyruvate dehydrogenase complex that contains multiple copies of pyruvate dehydrogenase (subunits PDHA (PDHA1 or PDHA2) and PDHB, E1), dihydrolipoamide acetyltransferase (DLAT, E2) and lipoamide dehydrogenase (DLD, E3). These subunits are bound to an inner core composed of about 48 DLAT and 12 PDHX molecules (by non covalent bonds). The 2-oxoglutarate dehydrogenase complex is composed of OGDH (2-oxoglutarate dehydrogenase; E1), DLST (dihydrolipoamide succinyltransferase; E2), DLD (dihydrolipoamide dehydrogenase; E3) and the assembly factor KGD4. It contains multiple copies of the three enzymatic components (E1, E2 and E3). In the nucleus, the 2-oxoglutarate dehydrogenase complex associates with KAT2A. Interacts with PDHX. FAD is required as a cofactor. Tyrosine phosphorylated.

The protein resides in the mitochondrion matrix. The protein localises to the nucleus. It is found in the cell projection. Its subcellular location is the cilium. It localises to the flagellum. The protein resides in the cytoplasmic vesicle. The protein localises to the secretory vesicle. It is found in the acrosome. It catalyses the reaction N(6)-[(R)-dihydrolipoyl]-L-lysyl-[protein] + NAD(+) = N(6)-[(R)-lipoyl]-L-lysyl-[protein] + NADH + H(+). Disruption of native heterodimer state inhibits primary dihydrolipoamide dehydrogenase activity and induces serine protease activity. Functionally, lipoamide dehydrogenase is a component of the glycine cleavage system as well as an E3 component of three alpha-ketoacid dehydrogenase complexes (pyruvate-, alpha-ketoglutarate-, and branched-chain amino acid-dehydrogenase complex). The 2-oxoglutarate dehydrogenase complex is mainly active in the mitochondrion. A fraction of the 2-oxoglutarate dehydrogenase complex also localizes in the nucleus and is required for lysine succinylation of histones: associates with KAT2A on chromatin and provides succinyl-CoA to histone succinyltransferase KAT2A. In monomeric form may have additional moonlighting function as serine protease. Involved in the hyperactivation of spermatazoa during capacitation and in the spermatazoal acrosome reaction. This chain is Dihydrolipoyl dehydrogenase, mitochondrial (DLD), found in Homo sapiens (Human).